The primary structure comprises 122 residues: UPF0231 protein VSAL_I2591 (122 aa).

This sequence belongs to the UPF0231 family.

The polypeptide is UPF0231 protein VSAL_I2591 (Aliivibrio salmonicida (strain LFI1238) (Vibrio salmonicida (strain LFI1238))).